An 84-amino-acid chain; its full sequence is Small ribosomal subunit protein bS16 (84 aa).

The protein belongs to the bacterial ribosomal protein bS16 family.

This Delftia acidovorans (strain DSM 14801 / SPH-1) protein is Small ribosomal subunit protein bS16.